We begin with the raw amino-acid sequence, 188 residues long: dCTP deaminase (188 aa).

Residues 111 to 116 (KSTYAR), 135 to 137 (TLE), Gln-156, Tyr-170, and Gln-180 contribute to the dCTP site. Glu-137 (proton donor/acceptor) is an active-site residue.

Belongs to the dCTP deaminase family. In terms of assembly, homotrimer.

The catalysed reaction is dCTP + H2O + H(+) = dUTP + NH4(+). Its pathway is pyrimidine metabolism; dUMP biosynthesis; dUMP from dCTP (dUTP route): step 1/2. Functionally, catalyzes the deamination of dCTP to dUTP. In Paracidovorax citrulli (strain AAC00-1) (Acidovorax citrulli), this protein is dCTP deaminase.